Consider the following 241-residue polypeptide: Tubulin-like protein alpha-4B (241 aa).

Residues 1-10 (MRHQQTERQD) show a composition bias toward basic and acidic residues. Residues 1 to 20 (MRHQQTERQDPSQPLSRQHG) form a disordered region. D10 is a GTP binding site. Position 10 (D10) interacts with Mg(2+). Over residues 11 to 20 (PSQPLSRQHG) the composition is skewed to polar residues. Residues S79, G83, T84, T118, N145, and N167 each coordinate GTP. E193 is a catalytic residue.

It belongs to the tubulin family. Mg(2+) serves as cofactor. In terms of processing, some glutamate residues at the C-terminus are polyglutamylated, resulting in polyglutamate chains on the gamma-carboxyl group. Polyglutamylation plays a key role in microtubule severing by spastin (SPAST). SPAST preferentially recognizes and acts on microtubules decorated with short polyglutamate tails: severing activity by SPAST increases as the number of glutamates per tubulin rises from one to eight, but decreases beyond this glutamylation threshold. Glutamylation is also involved in cilia motility. Some glutamate residues at the C-terminus are monoglycylated but not polyglycylated due to the absence of functional TTLL10 in human. Monoglycylation is mainly limited to tubulin incorporated into cilia and flagella axonemes, which is required for their stability and maintenance. Flagella glycylation controls sperm motility. Both polyglutamylation and monoglycylation can coexist on the same protein on adjacent residues, and lowering glycylation levels increases polyglutamylation, and reciprocally.

Its subcellular location is the cytoplasm. It localises to the cytoskeleton. The catalysed reaction is GTP + H2O = GDP + phosphate + H(+). Functionally, tubulin is the major constituent of microtubules, a cylinder consisting of laterally associated linear protofilaments composed ofalpha- and beta-tubulin heterodimers. The chain is Tubulin-like protein alpha-4B (TUBA4B) from Homo sapiens (Human).